Consider the following 229-residue polypeptide: Heptaprenylglyceryl phosphate synthase (229 aa).

K12 provides a ligand contact to sn-glycerol 1-phosphate. Mg(2+) is bound by residues D14 and S40. Residues 159–164, G189, and 209–210 each bind sn-glycerol 1-phosphate; these read YLEYSG and GN.

This sequence belongs to the GGGP/HepGP synthase family. Group I subfamily. Homodimer. It depends on Mg(2+) as a cofactor.

The catalysed reaction is sn-glycerol 1-phosphate + all-trans-heptaprenyl diphosphate = 3-heptaprenyl-sn-glycero-1-phosphate + diphosphate. The protein operates within membrane lipid metabolism; glycerophospholipid metabolism. In terms of biological role, prenyltransferase that catalyzes in vivo the transfer of the heptaprenyl moiety of heptaprenyl pyrophosphate (HepPP; 35 carbon atoms) to the C3 hydroxyl of sn-glycerol-1-phosphate (G1P), producing heptaprenylglyceryl phosphate (HepGP). This reaction is an ether-bond-formation step in the biosynthesis of archaea-type G1P-based membrane lipids found in Bacillales. This is Heptaprenylglyceryl phosphate synthase from Bacillus cereus (strain G9842).